A 227-amino-acid chain; its full sequence is N-acetyltransferase 8 (227 aa).

Over 1–42 the chain is Cytoplasmic; it reads MAPCHIRKYQESDRQWVVGLLSRGMAEHAPATFRQLLKLPRT. Residues 43–63 form a helical; Signal-anchor for type II membrane protein membrane-spanning segment; that stretch reads LILLLGGPLALLLVSGSWLLA. The N-acetyltransferase domain maps to 61–220; the sequence is LLALVFSISL…HTVHFIYHLP (160 aa). Residues 64–227 are Lumenal-facing; that stretch reads LVFSISLFPA…HLPSSKVGSL (164 aa).

The protein belongs to the NAT8 family. Preferentially expressed in liver and kidney. Also detected in brain (at protein level).

It localises to the endoplasmic reticulum-Golgi intermediate compartment membrane. Its subcellular location is the endoplasmic reticulum membrane. It catalyses the reaction L-lysyl-[protein] + acetyl-CoA = N(6)-acetyl-L-lysyl-[protein] + CoA + H(+). It carries out the reaction an S-substituted L-cysteine + acetyl-CoA = an N-acetyl-L-cysteine-S-conjugate + CoA + H(+). The protein operates within sulfur metabolism; glutathione metabolism. Its function is as follows. Endoplasmic reticulum (ER)-membrane-bound lysine N-acetyltransferase catalyzing the N6-acetylation of lysine residues in the lumen of the ER in various proteins, including PROM1 and BACE1, using acetyl-CoA as acetyl donor. Thereby, may regulate apoptosis through the acetylation and the regulation of the expression of PROM1. May also regulate amyloid beta-peptide secretion through acetylation of BACE1 and the regulation of its expression in neurons. N(6)-lysine acetylation in the ER maintains protein homeostasis and regulates reticulophagy. Alternatively, acetylates the free alpha-amino group of cysteine S-conjugates to form mercapturic acids. This is the final step in a major route for detoxification of a wide variety of reactive electrophiles which starts with their incorporation into glutathione S-conjugates. The glutathione S-conjugates are then further processed into cysteine S-conjugates and finally mercapturic acids which are water soluble and can be readily excreted in urine or bile. This is N-acetyltransferase 8 from Homo sapiens (Human).